An 840-amino-acid chain; its full sequence is Leucine--tRNA ligase (840 aa).

Positions 44-55 match the 'HIGH' region motif; sequence PYPSANGLHVGH. The 'KMSKS' region signature appears at 617-621; it reads KMSKS. Lys-620 is an ATP binding site.

It belongs to the class-I aminoacyl-tRNA synthetase family.

The protein resides in the cytoplasm. It catalyses the reaction tRNA(Leu) + L-leucine + ATP = L-leucyl-tRNA(Leu) + AMP + diphosphate. The chain is Leucine--tRNA ligase from Borreliella afzelii (strain PKo) (Borrelia afzelii).